Here is a 318-residue protein sequence, read N- to C-terminus: Cytochrome f (318 aa).

An N-terminal signal peptide occupies residues Met1 to Ala32. Tyr33, Cys53, Cys56, and His57 together coordinate heme. A helical transmembrane segment spans residues Ile284–Lys304.

It belongs to the cytochrome f family. In terms of assembly, the 4 large subunits of the cytochrome b6-f complex are cytochrome b6, subunit IV (17 kDa polypeptide, petD), cytochrome f and the Rieske protein, while the 4 small subunits are PetG, PetL, PetM and PetN. The complex functions as a dimer. Heme is required as a cofactor.

The protein resides in the plastid. It localises to the chloroplast thylakoid membrane. In terms of biological role, component of the cytochrome b6-f complex, which mediates electron transfer between photosystem II (PSII) and photosystem I (PSI), cyclic electron flow around PSI, and state transitions. This Angiopteris evecta (Mule's foot fern) protein is Cytochrome f.